Here is a 963-residue protein sequence, read N- to C-terminus: Pyruvate, phosphate dikinase 1, chloroplastic (963 aa).

The transit peptide at 1–76 (MLYIRKKMTS…GLHRETKARA (76 aa)) directs the protein to the chloroplast. At Thr543 the chain carries Phosphothreonine; by PDRP1. His545 serves as the catalytic Tele-phosphohistidine intermediate. 7 residues coordinate substrate: Arg651, Arg707, Glu836, Gly857, Thr858, Asn859, and Asp860. Glu836 is a Mg(2+) binding site. Residue Asp860 participates in Mg(2+) binding. Cys922 (proton donor) is an active-site residue.

The protein belongs to the PEP-utilizing enzyme family. As to quaternary structure, homotetramer. Interacts with RP1 and RP2. Mg(2+) is required as a cofactor. Phosphorylation of Thr-543 in the dark inactivates the enzyme. Dephosphorylation upon light stimulation reactivates the enzyme. As to expression, isoform 1 is expressed in leaves, flowers and siliques. Isoform 2 is found in cotyledons, rosette and cauline leaves, petioles, flowers and siliques.

Its subcellular location is the plastid. It localises to the chloroplast. The protein localises to the cytoplasm. The enzyme catalyses pyruvate + phosphate + ATP = phosphoenolpyruvate + AMP + diphosphate + H(+). With respect to regulation, activated by light-induced dephosphorylation. Inhibited by dark-induced phosphorylation. Both reactions are catalyzed by PDRP1. Its function is as follows. Formation of phosphoenolpyruvate. May be involved in regulating the flux of carbon into starch and fatty acids of seeds and in the remobilization of nitrogen reserves in senescing leaves. This Arabidopsis thaliana (Mouse-ear cress) protein is Pyruvate, phosphate dikinase 1, chloroplastic (PPDK).